We begin with the raw amino-acid sequence, 187 residues long: UPF0340 protein SGO_0411 (187 aa).

The protein belongs to the UPF0340 family.

The polypeptide is UPF0340 protein SGO_0411 (Streptococcus gordonii (strain Challis / ATCC 35105 / BCRC 15272 / CH1 / DL1 / V288)).